The sequence spans 261 residues: Non-homologous end joining protein Ku 1 (261 aa).

Residues 12-171 (SFSLVAIPVQ…LITLHYSDEV (160 aa)) enclose the Ku domain.

The protein belongs to the prokaryotic Ku family. Homodimer. Interacts with LigD.

In terms of biological role, with LigD forms a non-homologous end joining (NHEJ) DNA repair enzyme, which repairs dsDNA breaks with reduced fidelity. Binds linear dsDNA with 5'- and 3'- overhangs but not closed circular dsDNA nor ssDNA. Recruits and stimulates the ligase activity of LigD. This is Non-homologous end joining protein Ku 1 from Geotalea uraniireducens (strain Rf4) (Geobacter uraniireducens).